Reading from the N-terminus, the 611-residue chain is Probable methyltransferase PMT19 (611 aa).

The Cytoplasmic portion of the chain corresponds to 1-15; it reads MNPSQQHLPKLCPKR. A helical; Signal-anchor for type II membrane protein membrane pass occupies residues 16–36; the sequence is LFLFFTPFLLFSLYYILTTIK. The Lumenal segment spans residues 37-611; that stretch reads TITISSQDRH…TILIVDNSIK (575 aa). N-linked (GlcNAc...) asparagine glycosylation is found at asparagine 68, asparagine 97, asparagine 289, asparagine 408, asparagine 411, and asparagine 587.

The protein belongs to the methyltransferase superfamily.

It localises to the endoplasmic reticulum membrane. This Arabidopsis thaliana (Mouse-ear cress) protein is Probable methyltransferase PMT19.